The chain runs to 213 residues: Orotate phosphoribosyltransferase (213 aa).

Lys-26 serves as a coordination point for 5-phospho-alpha-D-ribose 1-diphosphate. Residue 34 to 35 (FF) participates in orotate binding. 5-phospho-alpha-D-ribose 1-diphosphate contacts are provided by residues 72 to 73 (YK), Arg-99, Lys-100, Lys-103, His-105, and 124 to 132 (DDVITAGTA). Residues Thr-128 and Arg-156 each coordinate orotate.

Belongs to the purine/pyrimidine phosphoribosyltransferase family. PyrE subfamily. Homodimer. It depends on Mg(2+) as a cofactor.

The catalysed reaction is orotidine 5'-phosphate + diphosphate = orotate + 5-phospho-alpha-D-ribose 1-diphosphate. The protein operates within pyrimidine metabolism; UMP biosynthesis via de novo pathway; UMP from orotate: step 1/2. Its function is as follows. Catalyzes the transfer of a ribosyl phosphate group from 5-phosphoribose 1-diphosphate to orotate, leading to the formation of orotidine monophosphate (OMP). This Vibrio cholerae serotype O1 (strain ATCC 39315 / El Tor Inaba N16961) protein is Orotate phosphoribosyltransferase.